We begin with the raw amino-acid sequence, 360 residues long: Mannonate dehydratase (360 aa).

Belongs to the mannonate dehydratase family. Requires Fe(2+) as cofactor. Mn(2+) is required as a cofactor.

It catalyses the reaction D-mannonate = 2-dehydro-3-deoxy-D-gluconate + H2O. The protein operates within carbohydrate metabolism; pentose and glucuronate interconversion. Its function is as follows. Catalyzes the dehydration of D-mannonate. This Thermotoga sp. (strain RQ2) protein is Mannonate dehydratase.